A 181-amino-acid chain; its full sequence is ATP synthase subunit delta (181 aa).

This sequence belongs to the ATPase delta chain family. In terms of assembly, F-type ATPases have 2 components, F(1) - the catalytic core - and F(0) - the membrane proton channel. F(1) has five subunits: alpha(3), beta(3), gamma(1), delta(1), epsilon(1). F(0) has three main subunits: a(1), b(2) and c(10-14). The alpha and beta chains form an alternating ring which encloses part of the gamma chain. F(1) is attached to F(0) by a central stalk formed by the gamma and epsilon chains, while a peripheral stalk is formed by the delta and b chains.

The protein resides in the cell inner membrane. F(1)F(0) ATP synthase produces ATP from ADP in the presence of a proton or sodium gradient. F-type ATPases consist of two structural domains, F(1) containing the extramembraneous catalytic core and F(0) containing the membrane proton channel, linked together by a central stalk and a peripheral stalk. During catalysis, ATP synthesis in the catalytic domain of F(1) is coupled via a rotary mechanism of the central stalk subunits to proton translocation. In terms of biological role, this protein is part of the stalk that links CF(0) to CF(1). It either transmits conformational changes from CF(0) to CF(1) or is implicated in proton conduction. This is ATP synthase subunit delta from Desulfotalea psychrophila (strain LSv54 / DSM 12343).